Here is a 259-residue protein sequence, read N- to C-terminus: Cobalt transport protein CbiM (259 aa).

An N-terminal signal peptide occupies residues methionine 1–alanine 25. A run of 6 helical transmembrane segments spans residues glycine 31 to tryptophan 51, methionine 68 to valine 88, leucine 100 to phenylalanine 120, threonine 132 to tyrosine 152, glycine 160 to threonine 180, and isoleucine 206 to phenylalanine 226.

This sequence belongs to the CbiM family. Forms an energy-coupling factor (ECF) transporter complex composed of an ATP-binding protein (A component, CbiO), a transmembrane protein (T component, CbiQ) and 2 possible substrate-capture proteins (S components, CbiM and CbiN) of unknown stoichimetry.

It localises to the cell membrane. It functions in the pathway cofactor biosynthesis; adenosylcobalamin biosynthesis. In terms of biological role, part of the energy-coupling factor (ECF) transporter complex CbiMNOQ involved in cobalt import. In Moorella thermoacetica (strain ATCC 39073 / JCM 9320), this protein is Cobalt transport protein CbiM.